Consider the following 397-residue polypeptide: Glutamyl-tRNA reductase (397 aa).

Residues 47 to 50, serine 98, 103 to 105, and glutamine 109 contribute to the substrate site; these read TCGR and ETD. Catalysis depends on cysteine 48, which acts as the Nucleophile. Residue 177–182 coordinates NADP(+); that stretch reads GAGAVG.

Belongs to the glutamyl-tRNA reductase family. In terms of assembly, homodimer.

It catalyses the reaction (S)-4-amino-5-oxopentanoate + tRNA(Glu) + NADP(+) = L-glutamyl-tRNA(Glu) + NADPH + H(+). Its pathway is porphyrin-containing compound metabolism; protoporphyrin-IX biosynthesis; 5-aminolevulinate from L-glutamyl-tRNA(Glu): step 1/2. In terms of biological role, catalyzes the NADPH-dependent reduction of glutamyl-tRNA(Glu) to glutamate 1-semialdehyde (GSA). This is Glutamyl-tRNA reductase from Pyrobaculum aerophilum (strain ATCC 51768 / DSM 7523 / JCM 9630 / CIP 104966 / NBRC 100827 / IM2).